A 428-amino-acid polypeptide reads, in one-letter code: Enolase (428 aa).

A (2R)-2-phosphoglycerate-binding site is contributed by Q163. Catalysis depends on E205, which acts as the Proton donor. D242, E285, and D312 together coordinate Mg(2+). 4 residues coordinate (2R)-2-phosphoglycerate: K337, R366, S367, and K388. K337 (proton acceptor) is an active-site residue.

It belongs to the enolase family. Requires Mg(2+) as cofactor.

The protein resides in the cytoplasm. Its subcellular location is the secreted. It is found in the cell surface. The catalysed reaction is (2R)-2-phosphoglycerate = phosphoenolpyruvate + H2O. It participates in carbohydrate degradation; glycolysis; pyruvate from D-glyceraldehyde 3-phosphate: step 4/5. Functionally, catalyzes the reversible conversion of 2-phosphoglycerate (2-PG) into phosphoenolpyruvate (PEP). It is essential for the degradation of carbohydrates via glycolysis. The polypeptide is Enolase (Finegoldia magna (strain ATCC 29328 / DSM 20472 / WAL 2508) (Peptostreptococcus magnus)).